The primary structure comprises 123 residues: uncharacterized protein (123 aa).

The signal sequence occupies residues 1-19 (MKIKYFFIPLFSSAILFSA). Cys20 carries the N-palmitoyl cysteine lipid modification. A lipid anchor (S-diacylglycerol cysteine) is attached at Cys20.

It belongs to the MG439/MG440 family.

It localises to the cell membrane. This is an uncharacterized protein from Mycoplasma pneumoniae (strain ATCC 29342 / M129 / Subtype 1) (Mycoplasmoides pneumoniae).